Consider the following 120-residue polypeptide: Large ribosomal subunit protein uL18 (120 aa).

It belongs to the universal ribosomal protein uL18 family. As to quaternary structure, part of the 50S ribosomal subunit; part of the 5S rRNA/L5/L18/L25 subcomplex. Contacts the 5S and 23S rRNAs.

In terms of biological role, this is one of the proteins that bind and probably mediate the attachment of the 5S RNA into the large ribosomal subunit, where it forms part of the central protuberance. The protein is Large ribosomal subunit protein uL18 of Methylorubrum populi (strain ATCC BAA-705 / NCIMB 13946 / BJ001) (Methylobacterium populi).